The primary structure comprises 332 residues: Probable cation efflux system protein MT2084 (332 aa).

5 helical membrane passes run 46–66 (ISLL…VMSG), 75–95 (IHNF…ALGA), 113–133 (AGSF…YEAI), 145–165 (VGWV…VALY), and 202–222 (VALG…AAIL).

It belongs to the cation diffusion facilitator (CDF) transporter (TC 2.A.4) family.

Its subcellular location is the cell membrane. This chain is Probable cation efflux system protein MT2084, found in Mycobacterium tuberculosis (strain CDC 1551 / Oshkosh).